The primary structure comprises 332 residues: Small ribosomal subunit protein uS2 (332 aa).

It belongs to the universal ribosomal protein uS2 family.

The chain is Small ribosomal subunit protein uS2 from Afipia carboxidovorans (strain ATCC 49405 / DSM 1227 / KCTC 32145 / OM5) (Oligotropha carboxidovorans).